Consider the following 84-residue polypeptide: Beta-defensin 119 (84 aa).

The signal sequence occupies residues 1–21 (MKLLYLFLAILLVIEEPVISG). 3 disulfide bridges follow: C28–C55, C35–C49, and C39–C56.

It belongs to the beta-defensin family.

It is found in the secreted. In terms of biological role, has antibacterial activity. The chain is Beta-defensin 119 (DEFB119) from Pongo pygmaeus (Bornean orangutan).